The sequence spans 376 residues: 23S rRNA (uracil(747)-C(5))-methyltransferase RlmC (376 aa).

Residues cysteine 3, cysteine 11, cysteine 14, and cysteine 88 each coordinate [4Fe-4S] cluster. S-adenosyl-L-methionine contacts are provided by glutamine 213, phenylalanine 242, glutamate 263, and asparagine 308. Cysteine 335 acts as the Nucleophile in catalysis.

This sequence belongs to the class I-like SAM-binding methyltransferase superfamily. RNA M5U methyltransferase family. RlmC subfamily.

It carries out the reaction uridine(747) in 23S rRNA + S-adenosyl-L-methionine = 5-methyluridine(747) in 23S rRNA + S-adenosyl-L-homocysteine + H(+). Catalyzes the formation of 5-methyl-uridine at position 747 (m5U747) in 23S rRNA. This Vibrio vulnificus (strain YJ016) protein is 23S rRNA (uracil(747)-C(5))-methyltransferase RlmC.